A 463-amino-acid polypeptide reads, in one-letter code: Exodeoxyribonuclease 7 large subunit (463 aa).

This sequence belongs to the XseA family. As to quaternary structure, heterooligomer composed of large and small subunits.

The protein localises to the cytoplasm. It carries out the reaction Exonucleolytic cleavage in either 5'- to 3'- or 3'- to 5'-direction to yield nucleoside 5'-phosphates.. Bidirectionally degrades single-stranded DNA into large acid-insoluble oligonucleotides, which are then degraded further into small acid-soluble oligonucleotides. This Klebsiella pneumoniae (strain 342) protein is Exodeoxyribonuclease 7 large subunit.